We begin with the raw amino-acid sequence, 248 residues long: UPF0246 protein A1G_03985 (248 aa).

It belongs to the UPF0246 family.

This Rickettsia rickettsii (strain Sheila Smith) protein is UPF0246 protein A1G_03985.